A 204-amino-acid chain; its full sequence is Ras-related protein RabQ (204 aa).

12-19 lines the GTP pocket; sequence GPPFVGKS. The Effector region signature appears at 34 to 42; it reads MDTTIGVEF. GTP contacts are provided by residues 60–64 and 118–121; these read DTAGQ and NKCD. 2 S-geranylgeranyl cysteine lipidation sites follow: Cys202 and Cys203.

The protein belongs to the small GTPase superfamily. Rab family.

The protein resides in the cell membrane. The chain is Ras-related protein RabQ (rabQ) from Dictyostelium discoideum (Social amoeba).